A 1498-amino-acid chain; its full sequence is DNA-directed RNA polymerase subunit beta' (1498 aa).

Positions 67, 69, 82, and 85 each coordinate Zn(2+). Asp499, Asp501, and Asp503 together coordinate Mg(2+). Zn(2+) contacts are provided by Cys867, Cys943, Cys950, and Cys953.

This sequence belongs to the RNA polymerase beta' chain family. As to quaternary structure, the RNAP catalytic core consists of 2 alpha, 1 beta, 1 beta' and 1 omega subunit. When a sigma factor is associated with the core the holoenzyme is formed, which can initiate transcription. It depends on Mg(2+) as a cofactor. Requires Zn(2+) as cofactor.

It carries out the reaction RNA(n) + a ribonucleoside 5'-triphosphate = RNA(n+1) + diphosphate. Functionally, DNA-dependent RNA polymerase catalyzes the transcription of DNA into RNA using the four ribonucleoside triphosphates as substrates. The sequence is that of DNA-directed RNA polymerase subunit beta' from Chlorobium luteolum (strain DSM 273 / BCRC 81028 / 2530) (Pelodictyon luteolum).